We begin with the raw amino-acid sequence, 302 residues long: Aspartate carbamoyltransferase catalytic subunit (302 aa).

Residues Arg51 and Thr52 each coordinate carbamoyl phosphate. Lys80 contacts L-aspartate. Carbamoyl phosphate is bound by residues Arg101, His129, and Gln132. Positions 162 and 224 each coordinate L-aspartate. Carbamoyl phosphate-binding residues include Leu263 and Pro264.

This sequence belongs to the aspartate/ornithine carbamoyltransferase superfamily. ATCase family. Heterododecamer (2C3:3R2) of six catalytic PyrB chains organized as two trimers (C3), and six regulatory PyrI chains organized as three dimers (R2).

The enzyme catalyses carbamoyl phosphate + L-aspartate = N-carbamoyl-L-aspartate + phosphate + H(+). The protein operates within pyrimidine metabolism; UMP biosynthesis via de novo pathway; (S)-dihydroorotate from bicarbonate: step 2/3. Its function is as follows. Catalyzes the condensation of carbamoyl phosphate and aspartate to form carbamoyl aspartate and inorganic phosphate, the committed step in the de novo pyrimidine nucleotide biosynthesis pathway. The polypeptide is Aspartate carbamoyltransferase catalytic subunit (Azobacteroides pseudotrichonymphae genomovar. CFP2).